A 975-amino-acid chain; its full sequence is Probable outer membrane protein PmpA (975 aa).

Residues 1-51 (MNRVIEIHAHYDQRQLSQSPNTNFLVHHPYLTLIPKFLLGALIVYAPYSFA) form the signal peptide. An Autotransporter domain is found at 699–975 (RSLIPTSYFG…SLSCGGYVGF (277 aa)).

This sequence belongs to the PMP outer membrane protein family.

The protein localises to the secreted. It localises to the cell wall. It is found in the cell outer membrane. This chain is Probable outer membrane protein PmpA (pmpA), found in Chlamydia trachomatis serovar D (strain ATCC VR-885 / DSM 19411 / UW-3/Cx).